The sequence spans 253 residues: Snake venom serine protease homolog HS120 (253 aa).

A signal peptide spans 1–18 (MVLIRVIANLLILQLSYA). A propeptide spanning residues 19-24 (QKSSEL) is cleaved from the precursor. The 220-residue stretch at 25–244 (VIGGDECNIN…YLPWIQSIIA (220 aa)) folds into the Peptidase S1 domain. 6 disulfide bridges follow: C31–C158, C49–C65, C98–C251, C137–C205, C169–C184, and C195–C220. N-linked (GlcNAc...) asparagine glycans are attached at residues N116 and N165.

It belongs to the peptidase S1 family. Snake venom subfamily. As to expression, expressed by the venom gland.

It is found in the secreted. In terms of biological role, snake venom serine protease homolog that may act in the hemostasis system of the prey. This Bothrops jararaca (Jararaca) protein is Snake venom serine protease homolog HS120.